The chain runs to 200 residues: Snake venom metalloproteinase BmooMP-I (200 aa).

The Peptidase M12B domain maps to 5–200; sequence RYIELAVVAD…HNPQCILNEP (196 aa). Residues Glu8 and Asp92 each contribute to the Ca(2+) site. 3 cysteine pairs are disulfide-bonded: Cys116/Cys195, Cys155/Cys179, and Cys157/Cys162. Residue His141 coordinates Zn(2+). Residue Glu142 is part of the active site. Zn(2+)-binding residues include His145 and His151. The Ca(2+) site is built by Cys195 and Asn198.

This sequence belongs to the venom metalloproteinase (M12B) family. P-I subfamily. Monomer. The cofactor is Zn(2+). As to expression, expressed by the venom gland.

The protein resides in the secreted. In terms of biological role, zinc metalloprotease that displays fibrinogenolytic, gelatinase and weak hemorrhagic activities. Degrades the three chain of fibrinogen Aalpha-chain (FGA), Bbeta-chain (FGB), and gamma (FGG). This is Snake venom metalloproteinase BmooMP-I from Bothrops moojeni (Lance-headed viper).